Reading from the N-terminus, the 295-residue chain is uncharacterized protein (295 aa).

One can recognise an HTH lysR-type domain in the interval 1–58; that stretch reads MESGDLRVFQMVAREGTITKAALQLGYVQSNVTARIQQLEAELGTTLFLRHNRGMTLS. The segment at residues 18–37 is a DNA-binding region (H-T-H motif); the sequence is ITKAALQLGYVQSNVTARIQ.

Belongs to the LysR transcriptional regulatory family.

This is an uncharacterized protein from Bacillus subtilis (strain 168).